Reading from the N-terminus, the 319-residue chain is Ferrochelatase (319 aa).

2 residues coordinate Fe cation: His194 and Glu275.

Belongs to the ferrochelatase family.

Its subcellular location is the cytoplasm. It catalyses the reaction heme b + 2 H(+) = protoporphyrin IX + Fe(2+). Its pathway is porphyrin-containing compound metabolism; protoheme biosynthesis; protoheme from protoporphyrin-IX: step 1/1. Functionally, catalyzes the ferrous insertion into protoporphyrin IX. The sequence is that of Ferrochelatase from Hamiltonella defensa subsp. Acyrthosiphon pisum (strain 5AT).